The sequence spans 309 residues: F-box/LRR-repeat protein At3g48880 (309 aa).

One can recognise an F-box domain in the interval 10-57 (LRRWEELDTDILVRIFQKFSVFELTSGLAHVCRGWRAACCDPILWKTV). LRR repeat units lie at residues 77 to 107 (VERR…IFHF), 108 to 133 (NLFL…VLPA), 159 to 184 (SIAN…KIMG), and 208 to 233 (CSAI…NISH).

This Arabidopsis thaliana (Mouse-ear cress) protein is F-box/LRR-repeat protein At3g48880.